Consider the following 261-residue polypeptide: Carbonic anhydrase 1 (261 aa).

Ala-2 bears the N-acetylalanine mark. The region spanning 4–261 (PDWGYDDKNG…LKGRTVRASF (258 aa)) is the Alpha-carbonic anhydrase domain. The Proton donor/acceptor role is filled by His-65. Residues His-95, His-97, and His-120 each coordinate Zn(2+). Substrate is bound by residues Thr-200 and 200 to 201 (TH). The disordered stretch occupies residues 235–261 (EGDNPVPSQRNNRPTQPLKGRTVRASF). The span at 240-249 (VPSQRNNRPT) shows a compositional bias: polar residues.

It belongs to the alpha-carbonic anhydrase family. Zn(2+) is required as a cofactor.

The protein localises to the cytoplasm. The enzyme catalyses hydrogencarbonate + H(+) = CO2 + H2O. The catalysed reaction is urea = cyanamide + H2O. Its activity is regulated as follows. Inhibited by acetazolamide. Catalyzes the reversible hydration of carbon dioxide. Can hydrate cyanamide to urea. The sequence is that of Carbonic anhydrase 1 (CA1) from Macaca nemestrina (Pig-tailed macaque).